A 62-amino-acid polypeptide reads, in one-letter code: Potassium channel toxin alpha-KTx Tx790 (62 aa).

Residues 1–18 form the signal peptide; it reads MQKLFIVLVLFCILRLDA. 3 disulfide bridges follow: cysteine 28/cysteine 46, cysteine 33/cysteine 59, and cysteine 37/cysteine 61.

This sequence belongs to the short scorpion toxin superfamily. Potassium channel inhibitor family. Alpha-KTx 23 subfamily. Expressed by the venom gland.

Its subcellular location is the secreted. In terms of biological role, may block potassium channels. The protein is Potassium channel toxin alpha-KTx Tx790 of Buthus israelis (Israeli scorpion).